A 428-amino-acid polypeptide reads, in one-letter code: MDDLNKYLINKGKKAKEASRFLSSVDSNFKNKALHKMGEDLKANMNKIIAANKIDMEKGKEKGLSKSLLDRLLIDEKRVNDMVNGLIEVAELPDPIGEVLNMWKRPNGINIGVKRVPLGVIGIIYEARPNVTVDATALCLKSGNAVILRGGSEAINTNKAIGKILENSAIESGLPEGTIQLIETTDREIVNKMLKLNEYIDVLIPRGGRGLIDNVVKNSTVPVIQTGVGLCHVYVDGSANLKMAQDIIVNAKTQRPGVCNALETLLVHKDVANSFLPEIVSEISKYGVESKLCEKSFEVVKGSIKDAKVLSLISEATEEDWDTEYLDLILSIKIVNSLDEALNHIYDHGTKHSEAIITENYTNSQRFLNEVDAAAVYVNASTRFTDGSQFGFGAEIGISTQKLHARGPMGLTQLTTTKYIIYGNGQIR.

It belongs to the gamma-glutamyl phosphate reductase family.

Its subcellular location is the cytoplasm. It carries out the reaction L-glutamate 5-semialdehyde + phosphate + NADP(+) = L-glutamyl 5-phosphate + NADPH + H(+). It participates in amino-acid biosynthesis; L-proline biosynthesis; L-glutamate 5-semialdehyde from L-glutamate: step 2/2. Functionally, catalyzes the NADPH-dependent reduction of L-glutamate 5-phosphate into L-glutamate 5-semialdehyde and phosphate. The product spontaneously undergoes cyclization to form 1-pyrroline-5-carboxylate. The polypeptide is Gamma-glutamyl phosphate reductase (Clostridium tetani (strain Massachusetts / E88)).